The following is an 81-amino-acid chain: ATP synthase subunit c, chloroplastic (81 aa).

A run of 2 helical transmembrane segments spans residues 3-23 (PLIAAASVIAAGLAVGLASIG) and 57-77 (LAFMEALTIYGLVVALALLFA).

It belongs to the ATPase C chain family. As to quaternary structure, F-type ATPases have 2 components, F(1) - the catalytic core - and F(0) - the membrane proton channel. F(1) has five subunits: alpha(3), beta(3), gamma(1), delta(1), epsilon(1). F(0) has four main subunits: a(1), b(1), b'(1) and c(10-14). The alpha and beta chains form an alternating ring which encloses part of the gamma chain. F(1) is attached to F(0) by a central stalk formed by the gamma and epsilon chains, while a peripheral stalk is formed by the delta, b and b' chains.

Its subcellular location is the plastid. It localises to the chloroplast thylakoid membrane. F(1)F(0) ATP synthase produces ATP from ADP in the presence of a proton or sodium gradient. F-type ATPases consist of two structural domains, F(1) containing the extramembraneous catalytic core and F(0) containing the membrane proton channel, linked together by a central stalk and a peripheral stalk. During catalysis, ATP synthesis in the catalytic domain of F(1) is coupled via a rotary mechanism of the central stalk subunits to proton translocation. In terms of biological role, key component of the F(0) channel; it plays a direct role in translocation across the membrane. A homomeric c-ring of between 10-14 subunits forms the central stalk rotor element with the F(1) delta and epsilon subunits. The protein is ATP synthase subunit c, chloroplastic of Pisum sativum (Garden pea).